The sequence spans 78 residues: D-alanyl carrier protein (78 aa).

A Carrier domain is found at M1 to K78. An O-(pantetheine 4'-phosphoryl)serine modification is found at S36.

Belongs to the DltC family. In terms of processing, 4'-phosphopantetheine is transferred from CoA to a specific serine of apo-DCP.

The protein localises to the cytoplasm. It participates in cell wall biogenesis; lipoteichoic acid biosynthesis. Carrier protein involved in the D-alanylation of lipoteichoic acid (LTA). The loading of thioester-linked D-alanine onto DltC is catalyzed by D-alanine--D-alanyl carrier protein ligase DltA. The DltC-carried D-alanyl group is further transferred to cell membrane phosphatidylglycerol (PG) by forming an ester bond, probably catalyzed by DltD. D-alanylation of LTA plays an important role in modulating the properties of the cell wall in Gram-positive bacteria, influencing the net charge of the cell wall. The sequence is that of D-alanyl carrier protein from Listeria monocytogenes serotype 4b (strain CLIP80459).